A 267-amino-acid polypeptide reads, in one-letter code: Trehalose-phosphate phosphatase (267 aa).

Asp-20 acts as the Nucleophile in catalysis. Residues Asp-20, Asp-22, and Asp-198 each coordinate Mg(2+). Residue 20–22 coordinates substrate; it reads DLD.

The protein belongs to the trehalose phosphatase family. Mg(2+) serves as cofactor.

It carries out the reaction alpha,alpha-trehalose 6-phosphate + H2O = alpha,alpha-trehalose + phosphate. It participates in glycan biosynthesis; trehalose biosynthesis. Functionally, removes the phosphate from trehalose 6-phosphate to produce free trehalose. The chain is Trehalose-phosphate phosphatase (otsB) from Salmonella typhimurium (strain SL1344).